Here is a 70-residue protein sequence, read N- to C-terminus: MDACLFHCKYPGISNARIFTEEEHNHDGTGLSQVVLNAIFNLVCLLQVYVQTSYLSQQSSIIRYTAFTGP.

This is an uncharacterized protein from Escherichia coli O157:H7.